The chain runs to 252 residues: 5'-nucleotidase SurE (252 aa).

Residues aspartate 8, aspartate 9, serine 40, and asparagine 93 each contribute to the a divalent metal cation site.

Belongs to the SurE nucleotidase family. Requires a divalent metal cation as cofactor.

The protein resides in the cytoplasm. It catalyses the reaction a ribonucleoside 5'-phosphate + H2O = a ribonucleoside + phosphate. Nucleotidase that shows phosphatase activity on nucleoside 5'-monophosphates. This chain is 5'-nucleotidase SurE, found in Methylocella silvestris (strain DSM 15510 / CIP 108128 / LMG 27833 / NCIMB 13906 / BL2).